Reading from the N-terminus, the 192-residue chain is MPSLLLASSSPYRRELLARLRLPFACESPDIDESHRPGETPHDLVQRLAREKAEALASEYPGHLIIGSDQVAVLDGQILGKPHTFERAREQLTAASDTRVTFLTGLALLNSSTGECQVDCVPFTVHMRELDQASIERYLRAETPYDCAGSFKAEGLGVSLFRSTQGADATSLIGLPLIRLVDMLIKEGVSVP.

The active-site Proton acceptor is the D69.

It belongs to the Maf family. YceF subfamily. It depends on a divalent metal cation as a cofactor.

The protein resides in the cytoplasm. The enzyme catalyses N(7)-methyl-GTP + H2O = N(7)-methyl-GMP + diphosphate + H(+). Its function is as follows. Nucleoside triphosphate pyrophosphatase that hydrolyzes 7-methyl-GTP (m(7)GTP). May have a dual role in cell division arrest and in preventing the incorporation of modified nucleotides into cellular nucleic acids. The protein is 7-methyl-GTP pyrophosphatase (maf-1) of Pseudomonas syringae pv. tomato (strain ATCC BAA-871 / DC3000).